The sequence spans 284 residues: RNA polymerase sigma factor RpoH (284 aa).

Residues 54-123 (MVLAHLRFVV…IHEFILRNWR (70 aa)) are sigma-70 factor domain-2. Positions 78 to 81 (DLIQ) match the Interaction with polymerase core subunit RpoC motif. Residues 229 to 280 (ALEGLDERSRDILQQRWLSEEKATLHDLAEKYNVSAERIRQLEKNAMSKLKG) form a sigma-70 factor domain-4 region. The segment at residues 253-272 (LHDLAEKYNVSAERIRQLEK) is a DNA-binding region (H-T-H motif).

Belongs to the sigma-70 factor family. RpoH subfamily. As to quaternary structure, interacts with the RNA polymerase core enzyme.

The protein localises to the cytoplasm. Sigma factors are initiation factors that promote the attachment of RNA polymerase to specific initiation sites and are then released. This sigma factor is involved in regulation of expression of heat shock genes. The protein is RNA polymerase sigma factor RpoH of Pseudomonas aeruginosa (strain ATCC 15692 / DSM 22644 / CIP 104116 / JCM 14847 / LMG 12228 / 1C / PRS 101 / PAO1).